Reading from the N-terminus, the 146-residue chain is Cystatin-C (146 aa).

An N-terminal signal peptide occupies residues 1–26 (MAGPLRAPLLLLAILAVALAVSPAAG). A Phosphoserine; by FAM20C modification is found at serine 43. The Secondary area of contact motif lies at 81–85 (QIVAG). 2 cysteine pairs are disulfide-bonded: cysteine 99/cysteine 109 and cysteine 123/cysteine 143.

This sequence belongs to the cystatin family. In terms of assembly, homodimer. Post-translationally, the Thr-25 variant is O-glycosylated with a core 1 or possibly core 8 glycan. The signal peptide of the O-glycosylated Thr-25 variant is cleaved between Ala-20 and Val-21. Expressed in submandibular and sublingual saliva but not in parotid saliva (at protein level). Expressed in various body fluids, such as the cerebrospinal fluid and plasma. Expressed in highest levels in the epididymis, vas deferens, brain, thymus, and ovary and the lowest in the submandibular gland.

The protein localises to the secreted. As an inhibitor of cysteine proteinases, this protein is thought to serve an important physiological role as a local regulator of this enzyme activity. The polypeptide is Cystatin-C (CST3) (Homo sapiens (Human)).